We begin with the raw amino-acid sequence, 485 residues long: Subtilisin-like protease 1 (485 aa).

An N-terminal signal peptide occupies residues 1–19 (MGIFRFISISLAAVSAANA). The propeptide occupies 20-116 (GHILSMGHAK…VEPDTTITIH (97 aa)). The region spanning 34 to 116 (SYIVVMKDGT…VEPDTTITIH (83 aa)) is the Inhibitor I9 domain. The 275-residue stretch at 126-400 (SWGLARISSQ…NILINNGDAK (275 aa)) folds into the Peptidase S8 domain. Residues aspartate 158 and histidine 190 each act as charge relay system in the active site. Asparagine 251 carries an N-linked (GlcNAc...) asparagine glycan. Serine 345 serves as the catalytic Charge relay system. The segment covering 377–394 (GTSSVTNPGPGTRTNILI) has biased composition (polar residues). The disordered stretch occupies residues 377 to 462 (GTSSVTNPGP…HTPFPNDDFN (86 aa)). Residues 409–418 (PSQPPKPSQP) are compositionally biased toward pro residues. Over residues 419–428 (SKPQQPSEPQ) the composition is skewed to low complexity. Positions 433-455 (PQEPAPGQPAPAPAPVPQHPHTP) are enriched in pro residues.

Belongs to the peptidase S8 family.

The protein resides in the secreted. Secreted subtilisin-like serine protease with keratinolytic activity that contributes to pathogenicity. This chain is Subtilisin-like protease 1 (SUB1), found in Arthroderma otae (Microsporum canis).